The following is a 518-amino-acid chain: Glutamate--cysteine ligase (518 aa).

The protein belongs to the glutamate--cysteine ligase type 1 family. Type 1 subfamily.

The enzyme catalyses L-cysteine + L-glutamate + ATP = gamma-L-glutamyl-L-cysteine + ADP + phosphate + H(+). It functions in the pathway sulfur metabolism; glutathione biosynthesis; glutathione from L-cysteine and L-glutamate: step 1/2. This is Glutamate--cysteine ligase from Salmonella agona (strain SL483).